The following is a 470-amino-acid chain: Dihydrolipoyl dehydrogenase (470 aa).

Residues 39–47 (EKATLGGVC), lysine 56, and alanine 119 each bind FAD. Residues cysteine 47 and cysteine 52 are joined by a disulfide bond. NAD(+) contacts are provided by residues 183–187 (GGGYI), glutamate 206, and 272–275 (TVGR). Residues aspartate 315 and alanine 323 each contribute to the FAD site. Histidine 447 (proton acceptor) is an active-site residue.

The protein belongs to the class-I pyridine nucleotide-disulfide oxidoreductase family. In terms of assembly, homodimer. Component of two multienzyme complexes: pyruvate dehydrogenase complex and oxoglutarate dehydrogenase complex. Requires FAD as cofactor.

The protein resides in the cytoplasm. The catalysed reaction is N(6)-[(R)-dihydrolipoyl]-L-lysyl-[protein] + NAD(+) = N(6)-[(R)-lipoyl]-L-lysyl-[protein] + NADH + H(+). Functionally, catalyzes the oxidation of dihydrolipoamide to lipoamide. This is Dihydrolipoyl dehydrogenase (pdhD) from Bacillus subtilis (strain 168).